The primary structure comprises 118 residues: uncharacterized protein (118 aa).

This sequence to S.pombe tam6.

It is found in the mitochondrion. This is an uncharacterized protein from Saccharomyces cerevisiae (strain ATCC 204508 / S288c) (Baker's yeast).